The sequence spans 39 residues: uncharacterized protein (39 aa).

This is an uncharacterized protein from Saccharomyces cerevisiae (strain ATCC 204508 / S288c) (Baker's yeast).